The chain runs to 312 residues: MNPVVTGPIIRLSADDRDHIADLVRACTEHDGVSPLNESGWFGLQGLTASHTHWIARDGKQVVGYAQADAREHTVQLMVAPPARRQGIATTLAKAAWQLHPAMWWSFGDCPGARELATQLGLREVRKLLKMSLPMPADQPHDAHLPEGLRLDHFRDDDLDQLVAVNHAAFVHHPEQGAMTAEDARNRMAQDWFDPAGLLVARDEAGTLVGFHWTKVADEDGRPRGEVYVLGVDPDFEGKGVGRALLDAGILHMRELGVEAIDLYVEGANERVVHMYERAGFSVVSTDVGYAPAKPARHQDHGRQSSPQERDA.

2 consecutive N-acetyltransferase domains span residues 8–136 (PIIR…LPMP) and 149–301 (LRLD…HQDH). A 1D-myo-inositol 2-(L-cysteinylamino)-2-deoxy-alpha-D-glucopyranoside-binding site is contributed by E38. Residues 77–79 (LMV) and 85–90 (RQGIAT) contribute to the acetyl-CoA site. 1D-myo-inositol 2-(L-cysteinylamino)-2-deoxy-alpha-D-glucopyranoside is bound by residues E175, K215, and E226. Acetyl-CoA-binding positions include 230–232 (LGV) and 237–243 (EGKGVGR). Y264 contacts 1D-myo-inositol 2-(L-cysteinylamino)-2-deoxy-alpha-D-glucopyranoside. 269–274 (NERVVH) is an acetyl-CoA binding site. Positions 292-312 (PAKPARHQDHGRQSSPQERDA) are disordered. The segment covering 297–312 (RHQDHGRQSSPQERDA) has biased composition (basic and acidic residues).

It belongs to the acetyltransferase family. MshD subfamily. As to quaternary structure, monomer.

The enzyme catalyses 1D-myo-inositol 2-(L-cysteinylamino)-2-deoxy-alpha-D-glucopyranoside + acetyl-CoA = mycothiol + CoA + H(+). Functionally, catalyzes the transfer of acetyl from acetyl-CoA to desacetylmycothiol (Cys-GlcN-Ins) to form mycothiol. This Propionibacterium freudenreichii subsp. shermanii (strain ATCC 9614 / DSM 4902 / CIP 103027 / NCIMB 8099 / CIRM-BIA1) protein is Mycothiol acetyltransferase.